The sequence spans 306 residues: Recombination-associated protein RdgC (306 aa).

This sequence belongs to the RdgC family.

The protein localises to the cytoplasm. It is found in the nucleoid. Its function is as follows. May be involved in recombination. This Pseudomonas putida (strain GB-1) protein is Recombination-associated protein RdgC.